A 25-amino-acid polypeptide reads, in one-letter code: Caerin-2.2 (25 aa).

This sequence belongs to the frog skin active peptide (FSAP) family. Caerin subfamily. In terms of tissue distribution, expressed by the skin parotoid and/or rostral glands.

It localises to the secreted. Its function is as follows. Antimicrobial peptide, that adopts an alpha helical conformation which can disrupt bacterial membranes. Each caerin displays a different antimicrobial specificity. The sequence is that of Caerin-2.2 from Ranoidea caerulea (Green tree frog).